We begin with the raw amino-acid sequence, 186 residues long: Tumor necrosis factor alpha-induced protein 8-like protein 1 (186 aa).

It belongs to the TNFAIP8 family. As to quaternary structure, interacts with FBXW5; TNFAIP8L1 competes with TSC2 to bind FBXW5 increasing TSC2 stability by preventing its ubiquitination.

Its subcellular location is the cytoplasm. Acts as a negative regulator of mTOR activity. The sequence is that of Tumor necrosis factor alpha-induced protein 8-like protein 1 (TNFAIP8L1) from Bos taurus (Bovine).